Reading from the N-terminus, the 506-residue chain is Sodium transporter HKT1 (506 aa).

Topologically, residues 1–19 (MDRVVAKIAKIRSQLTKLR) are cytoplasmic. The helical transmembrane segment at 20-40 (SLFFLYFIYFLFFSFLGFLAL) threads the bilayer. Topologically, residues 41–81 (KITKPRTTSRPHDFDLFFTSVSAITVSSMSTVDMEVFSNTQ) are extracellular. Residues 82–102 (LIFLTILMFLGGEIFTSFLNL) form a helical membrane-spanning segment. The Cytoplasmic portion of the chain corresponds to 103 to 159 (YVSYFTKFVFPHNKIRHILGSYNSDSSIEDRCDVETVTDYREGLIKIDERASKCLYS). A helical transmembrane segment spans residues 160 to 180 (VVLSYHLVTNLVGSVLLLVYV). Residues 181 to 232 (NFVKTARDVLSSKEISPLTFSVFTTVSTFANCGFVPTNENMIIFRKNSGLIW) are Extracellular-facing. A helical membrane pass occupies residues 233 to 253 (LLIPQVLMGNTLFPCFLVLLI). The Cytoplasmic portion of the chain corresponds to 254–286 (WGLYKITKRDEYGYILKNHNKMGYSHLLSVRLC). The chain crosses the membrane as a helical span at residues 287 to 307 (VLLGVTVLGFLIIQLLFFCAF). At 308 to 348 (EWTSESLEGMSSYEKLVGSLFQVVNSRHTGETIVDLSTLSP) the chain is on the extracellular side. The helical transmembrane segment at 349-369 (AILVLFILMMYLPPYTLFMPL) threads the bilayer. The Cytoplasmic segment spans residues 370-392 (TEQKTIEKEGGDDDSENGKKVKK). A helical transmembrane segment spans residues 393 to 413 (SGLIVSQLSFLTICIFLISIT). Residues 414–465 (ERQNLQRDPINFNVLNITLEVISAYGNVGFTTGYSCERRVDISDGGCKDASY) are Extracellular-facing. An N-linked (GlcNAc...) asparagine glycan is attached at asparagine 429. Residues 466–486 (GFAGRWSPMGKFVLIIVMFYG) form a helical membrane-spanning segment. Topologically, residues 487 to 506 (RFKQFTAKSGRAWILYPSSS) are cytoplasmic.

Belongs to the TrkH potassium transport family. HKT (TC 2.A.38.3) subfamily. Post-translationally, N-glycosylated. Not essential for functional expression and membrane targeting. In terms of tissue distribution, highly expressed in roots. Expressed in flowers, leaves and stems. Expressed in the vascular tissues of every organs. In roots, leaves and flower peduncles, it is only expressed in the phloem tissues. Not expressed in root peripheral cells.

It is found in the cell membrane. It catalyses the reaction Na(+)(in) = Na(+)(out). Its function is as follows. Sodium transporter protein, which plays a central role in plant tolerance to salt. Upon prolongated exposure to high concentrations, Na(+) translocates from the roots to the transpiring leaves where it can increase to toxic level. Involved in Na(+) recirculation from shoots to roots, probably by mediating Na(+) loading into the phloem sap in shoots and unloading in roots, thereby removing large amounts of Na(+) from the shoot. Does not transport K(+) but regulates K(+) nutrient status via its ability to facilitate Na(+) homeostasis. Probably not involved in root uptake of Na(+). This Arabidopsis thaliana (Mouse-ear cress) protein is Sodium transporter HKT1 (HKT1).